Here is a 433-residue protein sequence, read N- to C-terminus: MKSAISLLLASAATYVGASPHPEPPQLVLSPSTSTGVHGDEATSAIASSAADDVISDSPFLSFHRDLVQISSISGHERKAGDFVAEFLQAHNFTVVKQPVPSKDGRQPDEDRFNVFAYPSGASAAPKILLTSHIDTVPPFIPYSAARVDNDIRISGRGSVDAKGSVAAQVFAALDILERDPSAPLGLLFVVDEEVGGTGMKVFSDSSLNPSPSPFRAVIFGEPTDLALVSGHKGMLGFELVATGQAAHSGYPWLGHSAVSALLPALLRVDRLGDIPAQEGGLPSSPKYGRTTVNIGRMEGGVAANVVPASAHANVAVRLAAGTPDEARDIVRRAVRDATGGDENVYPDFSEWSEGYPPQDLDTDVDGFEVTTVNYGTDVPNLRIHERADGAPVRRYLYGPGSIHVAHGDHEAITVAQLEEALQGYRKLIEAAM.

A signal peptide spans 1-18 (MKSAISLLLASAATYVGA). A disordered region spans residues 20–40 (PHPEPPQLVLSPSTSTGVHGD). N-linked (GlcNAc...) asparagine glycosylation is present at asparagine 92. Aspartate 161 contacts Zn(2+). Glutamate 193 (proton acceptor) is an active-site residue. Residue glutamate 194 participates in Zn(2+) binding.

The protein belongs to the peptidase M20A family. It depends on Zn(2+) as a cofactor.

The protein localises to the secreted. This is Probable carboxypeptidase ATEG_02905 from Aspergillus terreus (strain NIH 2624 / FGSC A1156).